Consider the following 235-residue polypeptide: Large ribosomal subunit protein uL1 (235 aa).

Belongs to the universal ribosomal protein uL1 family. Part of the 50S ribosomal subunit.

In terms of biological role, binds directly to 23S rRNA. The L1 stalk is quite mobile in the ribosome, and is involved in E site tRNA release. Protein L1 is also a translational repressor protein, it controls the translation of the L11 operon by binding to its mRNA. This is Large ribosomal subunit protein uL1 from Fusobacterium nucleatum subsp. nucleatum (strain ATCC 25586 / DSM 15643 / BCRC 10681 / CIP 101130 / JCM 8532 / KCTC 2640 / LMG 13131 / VPI 4355).